The primary structure comprises 898 residues: Serine/threonine-protein kinase TAO3 (898 aa).

Residues 24 to 277 form the Protein kinase domain; sequence FVGLHEIGHG…SADLLRHDFV (254 aa). ATP-binding positions include 30–38 and Lys-53; that span reads IGHGSFGAV. The active-site Proton acceptor is Asp-147. The disordered stretch occupies residues 316 to 374; it reads TRNGPLTESQEEEEDSEHGSNLSRKMDSLGSNHSIPSMSVSTGSQSSSVSSMQEVLDES. A compositionally biased stretch (polar residues) spans 334 to 351; it reads GSNLSRKMDSLGSNHSIP. Residues 352 to 368 show a composition bias toward low complexity; it reads SMSVSTGSQSSSVSSMQ. 3 coiled-coil regions span residues 452–502, 548–649, and 754–875; these read EQEN…THAN, FLES…HAML, and LKSL…IETF. The disordered stretch occupies residues 565–596; sequence EEMNEDHSTPKKEKQERISKHKENLQHTQAEE.

This sequence belongs to the protein kinase superfamily. STE Ser/Thr protein kinase family. STE20 subfamily.

The protein resides in the cytoplasm. It is found in the cell membrane. The protein localises to the membrane raft. It localises to the lipid droplet. It catalyses the reaction L-seryl-[protein] + ATP = O-phospho-L-seryl-[protein] + ADP + H(+). The catalysed reaction is L-threonyl-[protein] + ATP = O-phospho-L-threonyl-[protein] + ADP + H(+). Serine/threonine-protein kinase that acts as a regulator of the p38/MAPK14 stress-activated MAPK cascade and of the MAPK8/JNK cascade. In response to DNA damage, involved in the G2/M transition DNA damage checkpoint by activating the p38/MAPK14 stress-activated MAPK cascade, probably by mediating phosphorylation of upstream MAP kinase kinases. Inhibits basal activity of the MAPK8/JNK cascade. In Gallus gallus (Chicken), this protein is Serine/threonine-protein kinase TAO3 (TAOK3).